The chain runs to 143 residues: FAD synthase (143 aa).

ATP-binding positions include 13 to 14 (TF), 18 to 21 (HPGH), and Asp-96.

This sequence belongs to the archaeal FAD synthase family. In terms of assembly, homodimer. A divalent metal cation serves as cofactor.

It catalyses the reaction FMN + ATP + H(+) = FAD + diphosphate. The protein operates within cofactor biosynthesis; FAD biosynthesis; FAD from FMN: step 1/1. Its function is as follows. Catalyzes the transfer of the AMP portion of ATP to flavin mononucleotide (FMN) to produce flavin adenine dinucleotide (FAD) coenzyme. This Methanothrix thermoacetophila (strain DSM 6194 / JCM 14653 / NBRC 101360 / PT) (Methanosaeta thermophila) protein is FAD synthase.